A 546-amino-acid chain; its full sequence is uncharacterized protein (546 aa).

One can recognise an SLH domain in the interval 52-123 (SVAELRDVQP…NTIEQLLQEN (72 aa)).

The protein belongs to the OprB family.

This is an uncharacterized protein from Synechocystis sp. (strain ATCC 27184 / PCC 6803 / Kazusa).